A 363-amino-acid polypeptide reads, in one-letter code: Dihydroorotate dehydrogenase (quinone) (363 aa).

FMN contacts are provided by residues 67 to 71 (AGLDK) and T91. K71 is a substrate binding site. 116 to 120 (NRMGF) contacts substrate. FMN contacts are provided by N145 and N178. Substrate is bound at residue N178. The Nucleophile role is filled by S181. N183 lines the substrate pocket. FMN contacts are provided by K219 and T247. Substrate is bound at residue 248–249 (NT). Residues G268, G297, and 318–319 (YT) each bind FMN.

The protein belongs to the dihydroorotate dehydrogenase family. Type 2 subfamily. In terms of assembly, monomer. The cofactor is FMN.

The protein resides in the cell membrane. The catalysed reaction is (S)-dihydroorotate + a quinone = orotate + a quinol. The protein operates within pyrimidine metabolism; UMP biosynthesis via de novo pathway; orotate from (S)-dihydroorotate (quinone route): step 1/1. Catalyzes the conversion of dihydroorotate to orotate with quinone as electron acceptor. The protein is Dihydroorotate dehydrogenase (quinone) of Myxococcus xanthus (strain DK1622).